The following is an 88-amino-acid chain: Sec-independent protein translocase protein TatA (88 aa).

Residues 1-21 (MGGISIWQLLIIAVIVVLLFG) traverse the membrane as a helical segment. Residues 41–88 (KAMGDENQKETNNAEKTTNDADFDTKNLAQKTSTEEKSTTESKNKEQV) are disordered. Composition is skewed to basic and acidic residues over residues 42–65 (AMGD…DFDT) and 73–88 (STEE…KEQV).

It belongs to the TatA/E family. As to quaternary structure, the Tat system comprises two distinct complexes: a TatABC complex, containing multiple copies of TatA, TatB and TatC subunits, and a separate TatA complex, containing only TatA subunits. Substrates initially bind to the TatABC complex, which probably triggers association of the separate TatA complex to form the active translocon.

The protein resides in the cell inner membrane. Its function is as follows. Part of the twin-arginine translocation (Tat) system that transports large folded proteins containing a characteristic twin-arginine motif in their signal peptide across membranes. TatA could form the protein-conducting channel of the Tat system. This chain is Sec-independent protein translocase protein TatA, found in Proteus mirabilis (strain HI4320).